Reading from the N-terminus, the 175-residue chain is NADH dehydrogenase [ubiquinone] iron-sulfur protein 4, mitochondrial (175 aa).

The N-terminal 42 residues, 1–42 (MAAVSMSVVLRQTLWRRRAVAVAALSVSRVPTRSLRTSTWRL), are a transit peptide targeting the mitochondrion. The segment at 151 to 175 (KVPKPKSKSYGANFSWNKRTRVSTK) is disordered. S173 is modified (phosphoserine; by PKA).

It belongs to the complex I NDUFS4 subunit family. In terms of assembly, mammalian complex I is composed of 45 different subunits. This is a component of the iron-sulfur (IP) fragment of the enzyme. Interacts with BCAP31 and TOMM40; the interaction mediates its translocation to the mitochondria; the interaction with BCAP31 is direct.

It localises to the mitochondrion inner membrane. In terms of biological role, accessory subunit of the mitochondrial membrane respiratory chain NADH dehydrogenase (Complex I), that is believed not to be involved in catalysis. Complex I functions in the transfer of electrons from NADH to the respiratory chain. The immediate electron acceptor for the enzyme is believed to be ubiquinone. The polypeptide is NADH dehydrogenase [ubiquinone] iron-sulfur protein 4, mitochondrial (NDUFS4) (Homo sapiens (Human)).